The primary structure comprises 498 residues: GTPase Der (498 aa).

EngA-type G domains follow at residues 3-167 and 210-383; these read PVVA…FDDL and IKLA…KSAT. GTP contacts are provided by residues 9 to 16, 57 to 61, 119 to 122, 216 to 223, 263 to 267, and 328 to 331; these read GRPNVGKS, DTGGI, NKID, DTAGV, and NKWD. One can recognise a KH-like domain in the interval 384 to 468; sequence TRVGTSVLTR…PIRINFQNSD (85 aa).

It belongs to the TRAFAC class TrmE-Era-EngA-EngB-Septin-like GTPase superfamily. EngA (Der) GTPase family. In terms of assembly, associates with the 50S ribosomal subunit.

Its function is as follows. GTPase that plays an essential role in the late steps of ribosome biogenesis. This is GTPase Der from Vibrio campbellii (strain ATCC BAA-1116).